Reading from the N-terminus, the 201-residue chain is IMP cyclohydrolase (201 aa).

It belongs to the archaeal IMP cyclohydrolase family.

It catalyses the reaction IMP + H2O = 5-formamido-1-(5-phospho-D-ribosyl)imidazole-4-carboxamide. The protein operates within purine metabolism; IMP biosynthesis via de novo pathway; IMP from 5-formamido-1-(5-phospho-D-ribosyl)imidazole-4-carboxamide: step 1/1. Functionally, catalyzes the cyclization of 5-formylamidoimidazole-4-carboxamide ribonucleotide to IMP. The sequence is that of IMP cyclohydrolase from Methanococcus maripaludis (strain DSM 14266 / JCM 13030 / NBRC 101832 / S2 / LL).